The following is a 224-amino-acid chain: LOB domain-containing protein 15 (224 aa).

One can recognise an LOB domain in the interval Thr44 to Ile145. The interval Ser171–Gly224 is disordered. Over residues Ala178–Pro198 the composition is skewed to pro residues.

This sequence belongs to the LOB domain-containing protein family. In terms of tissue distribution, expressed in young shoots, roots, stems, leaves and flowers.

The polypeptide is LOB domain-containing protein 15 (LBD15) (Arabidopsis thaliana (Mouse-ear cress)).